Reading from the N-terminus, the 160-residue chain is S-ribosylhomocysteine lyase (160 aa).

Fe cation contacts are provided by His57, His61, and Cys127.

The protein belongs to the LuxS family. In terms of assembly, homodimer. It depends on Fe cation as a cofactor.

It carries out the reaction S-(5-deoxy-D-ribos-5-yl)-L-homocysteine = (S)-4,5-dihydroxypentane-2,3-dione + L-homocysteine. Its function is as follows. Involved in the synthesis of autoinducer 2 (AI-2) which is secreted by bacteria and is used to communicate both the cell density and the metabolic potential of the environment. The regulation of gene expression in response to changes in cell density is called quorum sensing. Catalyzes the transformation of S-ribosylhomocysteine (RHC) to homocysteine (HC) and 4,5-dihydroxy-2,3-pentadione (DPD). This is S-ribosylhomocysteine lyase from Streptococcus pyogenes serotype M4 (strain MGAS10750).